We begin with the raw amino-acid sequence, 432 residues long: UDP-N-acetylmuramate--L-alanine ligase (432 aa).

Position 108–114 (108–114) interacts with ATP; the sequence is GAHGKTS.

This sequence belongs to the MurCDEF family.

Its subcellular location is the cytoplasm. It catalyses the reaction UDP-N-acetyl-alpha-D-muramate + L-alanine + ATP = UDP-N-acetyl-alpha-D-muramoyl-L-alanine + ADP + phosphate + H(+). It participates in cell wall biogenesis; peptidoglycan biosynthesis. In terms of biological role, cell wall formation. This chain is UDP-N-acetylmuramate--L-alanine ligase, found in Bacillus pumilus (strain SAFR-032).